Consider the following 581-residue polypeptide: Serine/threonine-protein kinase PINK1, mitochondrial (581 aa).

The N-terminal 77 residues, 1–77 (MAVRQALGRG…RFFRQSVAGL (77 aa)), are a transit peptide targeting the mitochondrion. The Mitochondrial intermembrane segment spans residues 78–93 (AARLQRQFVVRAWGCA). The helical transmembrane segment at 94–110 (GPCGRAVFLAFGLGLGL) threads the bilayer. The tract at residues 111–117 (IEEKQAE) is required for outer membrane localization. The Cytoplasmic segment spans residues 111 to 581 (IEEKQAESRR…LLLCSWRAAL (471 aa)). The region spanning 156-511 (YLIGQSIGKG…VAANVLHLSL (356 aa)) is the Protein kinase domain. ATP is bound by residues 162 to 170 (IGKGCSAAV) and K186. The disordered stretch occupies residues 189 to 208 (GLLPGRGPGTSAPGEGQERA). S228 is subject to Phosphoserine; by autocatalysis. D362 serves as the catalytic Proton acceptor. A Phosphoserine; by autocatalysis modification is found at S402.

It belongs to the protein kinase superfamily. Ser/Thr protein kinase family. As to quaternary structure, upon mitochondrial depolarization, it forms a supercomplex with TOM and TIM23 complexes. PINK1-TOM-TIM23 supercomplex formation requires PINK1 interaction with TOMM20 and TOMM70 and is critical for PINK1 stabilization at the outer mitochondrial membrane, kinase activation and downstream mitophagy. Upon mitochondrial depolarization, interacts with TIMM23; the interaction is required for PINK1 accumulation at the outer mitochondrial membrane, kinase activation by autophosphorylation and PRKN recruitement to mitochondria. Interacts with PRKN. Interacts with FBXO7. Forms a complex with PRKN and PARK7. Interacts with NENF. Requires Mg(2+) as cofactor. Proteolytically cleaved. In healthy cells, the precursor is continuously imported into the inner mitochondrial membrane (IMM), where it is proteolytically cleaved by mitochondrial-processing peptidase (MPP) and then undergoes further proteolytic cleavage by PARL or AFG3L2 to give rise to the 52 kDa short form. The 52 kDa short form is then released into the cytosol where it rapidly undergoes proteasome-dependent degradation. In unhealthy cells, when cellular stress conditions lead to the loss of mitochondrial membrane potential, mitochondrial import is impaired leading to the precursor accumulating on the outer mitochondrial membrane (OMM). If accumulation at the OMM fails and it is imported into the depolarized mitochondria, it undergoes cleavage by the IMM protease OMA1, promoting its subsequent degradation by the proteasome. In terms of processing, autophosphorylated. Loss of mitochondrial membrane potential results in the precursor accumulating on the outer mitochondrial membrane (OMM) where it is activated by autophosphorylation. Autophosphorylation at Ser-228 and Ser-402 is sufficient and essential for selective recruitment of PRKN to depolarized mitochondria, via PINK1-dependent phosphorylation of ubiquitin and maybe PRKN. Highly expressed in heart, skeletal muscle and testis, and at lower levels in brain, placenta, liver, kidney, pancreas, prostate, ovary and small intestine. Present in the embryonic testis from an early stage of development.

It localises to the mitochondrion outer membrane. The protein resides in the mitochondrion inner membrane. It is found in the cytoplasm. Its subcellular location is the cytosol. The catalysed reaction is L-seryl-[protein] + ATP = O-phospho-L-seryl-[protein] + ADP + H(+). The enzyme catalyses L-threonyl-[protein] + ATP = O-phospho-L-threonyl-[protein] + ADP + H(+). Serine/threonine-protein kinase which acts as a sensor of mitochondrial damage and protects against mitochondrial dysfunction during cellular stress. It phosphorylates mitochondrial proteins to coordinate mitochondrial quality control mechanisms that remove and replace dysfunctional mitochondrial components. Depending on the severity of mitochondrial damage, activity ranges from preventing apoptosis and stimulating mitochondrial biogenesis to eliminating severely damaged mitochondria via PINK1-PRKN-dependent mitophagy. When cellular stress results in irreversible mitochondrial damage, PINK1 accumulates at the outer mitochondrial membrane (OMM) where it phosphorylates pre-existing polyubiquitin chains at 'Ser-65', recruits PRKN from the cytosol to the OMM and activates PRKN by phosphorylation at 'Ser-65'; activated PRKN then ubiquinates VDAC1 and other OMM proteins to initiate mitophagy. The PINK1-PRKN pathway also promotes fission of damaged mitochondria through phosphorylation and PRKN-dependent degradation of mitochondrial proteins involved in fission such as MFN2. This prevents the refusion of unhealthy mitochondria with the mitochondrial network or initiates mitochondrial fragmentation facilitating their later engulfment by autophagosomes. Also promotes mitochondrial fission independently of PRKN and ATG7-mediated mitophagy, via the phosphorylation and activation of DNM1L. Regulates motility of damaged mitochondria by promoting the ubiquitination and subsequent degradation of MIRO1 and MIRO2; in motor neurons, this likely inhibits mitochondrial intracellular anterograde transport along the axons which probably increases the chance of the mitochondria undergoing mitophagy in the soma. Required for ubiquinone reduction by mitochondrial complex I by mediating phosphorylation of complex I subunit NDUFA10. Phosphorylates LETM1, positively regulating its mitochondrial calcium transport activity. The polypeptide is Serine/threonine-protein kinase PINK1, mitochondrial (PINK1) (Homo sapiens (Human)).